Consider the following 287-residue polypeptide: Pyridoxal 5'-phosphate synthase subunit PdxS (287 aa).

Asp-21 contributes to the D-ribose 5-phosphate binding site. The active-site Schiff-base intermediate with D-ribose 5-phosphate is Lys-78. D-ribose 5-phosphate is bound at residue Gly-150. Residue Arg-162 coordinates D-glyceraldehyde 3-phosphate. Residues Gly-211 and Gly-232–Ser-233 contribute to the D-ribose 5-phosphate site.

This sequence belongs to the PdxS/SNZ family. In terms of assembly, in the presence of PdxT, forms a dodecamer of heterodimers.

It catalyses the reaction aldehydo-D-ribose 5-phosphate + D-glyceraldehyde 3-phosphate + L-glutamine = pyridoxal 5'-phosphate + L-glutamate + phosphate + 3 H2O + H(+). It functions in the pathway cofactor biosynthesis; pyridoxal 5'-phosphate biosynthesis. Functionally, catalyzes the formation of pyridoxal 5'-phosphate from ribose 5-phosphate (RBP), glyceraldehyde 3-phosphate (G3P) and ammonia. The ammonia is provided by the PdxT subunit. Can also use ribulose 5-phosphate and dihydroxyacetone phosphate as substrates, resulting from enzyme-catalyzed isomerization of RBP and G3P, respectively. The sequence is that of Pyridoxal 5'-phosphate synthase subunit PdxS from Tropheryma whipplei (strain Twist) (Whipple's bacillus).